Reading from the N-terminus, the 1905-residue chain is Alpha-2-macroglobulin (1905 aa).

Positions 1 to 21 are cleaved as a signal peptide; that stretch reads MNKQYFLSLFSTLAVALTLSG. Residue Cys-22 is the site of N-palmitoyl cysteine attachment. A lipid anchor (S-diacylglycerol cysteine) is attached at Cys-22. Residues 1438–1441 constitute a cross-link (isoglutamyl cysteine thioester (Cys-Gln)); the sequence is CTEQ.

Belongs to the protease inhibitor I39 (alpha-2-macroglobulin) family. Bacterial alpha-2-macroglobulin subfamily.

It localises to the cell membrane. Its function is as follows. Protects the bacterial cell from host peptidases. The chain is Alpha-2-macroglobulin from Pasteurella multocida (strain Pm70).